Here is a 93-residue protein sequence, read N- to C-terminus: Phosphoribosyl-ATP pyrophosphatase (93 aa).

This sequence belongs to the PRA-PH family.

The protein resides in the cytoplasm. It catalyses the reaction 1-(5-phospho-beta-D-ribosyl)-ATP + H2O = 1-(5-phospho-beta-D-ribosyl)-5'-AMP + diphosphate + H(+). It participates in amino-acid biosynthesis; L-histidine biosynthesis; L-histidine from 5-phospho-alpha-D-ribose 1-diphosphate: step 2/9. The chain is Phosphoribosyl-ATP pyrophosphatase from Mycolicibacterium paratuberculosis (strain ATCC BAA-968 / K-10) (Mycobacterium paratuberculosis).